The sequence spans 377 residues: Putative holocytochrome-c synthase (377 aa).

2 disordered regions span residues 1–29 (MTSSETTTDHPRTGKCPIDHSKFARSNEA) and 111–136 (QNSEATPAVQPPATCPMSNSNQKPAG). The segment covering 7-22 (TTDHPRTGKCPIDHSK) has biased composition (basic and acidic residues). 2 HRM repeats span residues 114–119 (EATPAV) and 124–129 (TCPMSN).

Belongs to the cytochrome c-type heme lyase family.

Its subcellular location is the mitochondrion inner membrane. It is found in the mitochondrion intermembrane space. It carries out the reaction holo-[cytochrome c] = apo-[cytochrome c] + heme b. Functionally, lyase that catalyzes the covalent linking of the heme group to the cytochrome C apoprotein to produce the mature functional cytochrome. In Schizosaccharomyces pombe (strain 972 / ATCC 24843) (Fission yeast), this protein is Putative holocytochrome-c synthase.